We begin with the raw amino-acid sequence, 431 residues long: Enolase (431 aa).

Gln167 provides a ligand contact to (2R)-2-phosphoglycerate. Glu209 functions as the Proton donor in the catalytic mechanism. 3 residues coordinate Mg(2+): Asp246, Glu289, and Asp316. 4 residues coordinate (2R)-2-phosphoglycerate: Lys341, Arg370, Ser371, and Lys392. Lys341 functions as the Proton acceptor in the catalytic mechanism.

This sequence belongs to the enolase family. As to quaternary structure, component of the RNA degradosome, a multiprotein complex involved in RNA processing and mRNA degradation. It depends on Mg(2+) as a cofactor.

Its subcellular location is the cytoplasm. It is found in the secreted. The protein resides in the cell surface. The enzyme catalyses (2R)-2-phosphoglycerate = phosphoenolpyruvate + H2O. Its pathway is carbohydrate degradation; glycolysis; pyruvate from D-glyceraldehyde 3-phosphate: step 4/5. In terms of biological role, catalyzes the reversible conversion of 2-phosphoglycerate (2-PG) into phosphoenolpyruvate (PEP). It is essential for the degradation of carbohydrates via glycolysis. In Shewanella pealeana (strain ATCC 700345 / ANG-SQ1), this protein is Enolase.